The primary structure comprises 273 residues: DNA repair protein RecO (273 aa).

This sequence belongs to the RecO family.

Its function is as follows. Involved in DNA repair and RecF pathway recombination. This chain is DNA repair protein RecO, found in Mycolicibacterium gilvum (strain PYR-GCK) (Mycobacterium gilvum (strain PYR-GCK)).